Consider the following 264-residue polypeptide: Carbohydrate deacetylase (264 aa).

Asp-20 acts as the Proton acceptor in catalysis. Mg(2+) contacts are provided by Asp-21, His-60, and His-127. The active-site Proton donor is the His-215.

The protein belongs to the YdjC deacetylase family. Homodimer. Requires Mg(2+) as cofactor.

Functionally, probably catalyzes the deacetylation of acetylated carbohydrates an important step in the degradation of oligosaccharides. This chain is Carbohydrate deacetylase, found in Thermus thermophilus (strain ATCC 27634 / DSM 579 / HB8).